We begin with the raw amino-acid sequence, 409 residues long: Multidrug resistance protein MdtG (409 aa).

10 helical membrane passes run 16-36, 58-78, 92-112, 115-135, 146-166, 173-193, 224-244, 256-276, 291-311, and 379-399; these read LIVA…VMPF, IVFS…GGLA, LGMG…QFLI, ALLG…ATQV, TLST…GLLA, PVFF…LFCI, LFVT…ILTL, VAFI…LLSA, ILIT…YVQT, and AVFL…WNSL.

The protein belongs to the major facilitator superfamily. DHA1 family. MdtG (TC 2.A.1.2.20) subfamily.

It is found in the cell inner membrane. In terms of biological role, confers resistance to fosfomycin and deoxycholate. The sequence is that of Multidrug resistance protein MdtG from Escherichia coli O9:H4 (strain HS).